A 193-amino-acid polypeptide reads, in one-letter code: Segregation and condensation protein B (193 aa).

Belongs to the ScpB family. As to quaternary structure, homodimer. Homodimerization may be required to stabilize the binding of ScpA to the Smc head domains. Component of a cohesin-like complex composed of ScpA, ScpB and the Smc homodimer, in which ScpA and ScpB bind to the head domain of Smc. The presence of the three proteins is required for the association of the complex with DNA.

It is found in the cytoplasm. Its function is as follows. Participates in chromosomal partition during cell division. May act via the formation of a condensin-like complex containing Smc and ScpA that pull DNA away from mid-cell into both cell halves. This is Segregation and condensation protein B from Clostridium botulinum (strain Kyoto / Type A2).